Consider the following 839-residue polypeptide: MAAAVAMRGSSSDGGGYDKVSGMDSGKYVRYTPEQVEALERVYADCPKPTSSRRQQLLRECPILANIEPKQIKVWFQNRRCRDKQRKESSRLQAVNRKLTAMNKLLMEENERLQKQVSQLVHENAHMRQQLQNTPLANDTSCESNVTTPQNPLRDASNPSGLLSIAEETLTEFLSKATGTAIDWVQMPGMKPGPDSVGIVAISHGCRGVAARACGLVNLEPTKVVEILKDRPSWFRDCRNLEVFTMIPAGNGGTVELVYTQLYAPTTLVPARDFWTLRYTTTMEDGSLVVCERSLSGSGGGPSAASAQQYVRAEMLPSGYLVRPCEGGGSIVHIVDHLDLEAWSVPEVLRPLYESSRVVAQKMTTAALRHIRQIAQETSGEVVYALGRQPAVLRTFSQRLSRGFNDAISGFNDDGWSIMGGDGVEDVVIACNSTKKIRSNSNAGIAFGAPGGIICAKASMLLQSVPPAVLVRFLREHRSEWADYNIDAYLASTLKTSACSLTGLRPMRFSGSQIIIPLAHTVENEEILEVVRLEGQPLTHDEALLSRDIHLLQLCTGIDEKSVGSSFQLVFAPIDDFPDETPLISSGFRVIPLDMKTDGASSGRTLDLASSLEVGSATAQASGDASADDCNLRSVLTIAFQFPYELHLQDSVAAMARQYVRSIVSAVQRVSMAISPSQTGLNAGQRIISGFPEAATLARWVCQSYHYHLGVELLSQSDGDAEQLLKMLWHYQDAILCCSFKEKPVFTFANKAGLDMLETSLVALQDLTLDRIFDEPGKEALFSNIPKLMEQGHVYLPSGVCMSGMGRHVSFDQAVAWKVLAEDSNVHCLAFCFVNWSFV.

Disordered stretches follow at residues 1 to 24 and 132 to 157; these read MAAAVAMRGSSSDGGGYDKVSGMD and QNTPLANDTSCESNVTTPQNPLRDAS. The homeobox DNA-binding region spans 24–87; the sequence is DSGKYVRYTP…NRRCRDKQRK (64 aa). Positions 91–134 form a coiled coil; the sequence is RLQAVNRKLTAMNKLLMEENERLQKQVSQLVHENAHMRQQLQNT. The 229-residue stretch at 155 to 383 folds into the START domain; it reads DASNPSGLLS…IAQETSGEVV (229 aa).

Belongs to the HD-ZIP homeobox family. Class III subfamily. Expressed in stems, leaf sheaths and blades and panicles.

It localises to the nucleus. Its function is as follows. Probable transcription factor. This chain is Homeobox-leucine zipper protein HOX10 (HOX10), found in Oryza sativa subsp. japonica (Rice).